The primary structure comprises 298 residues: Acetaldehyde dehydrogenase (298 aa).

6–9 (SGNI) is a binding site for NAD(+). Residue C121 is the Acyl-thioester intermediate of the active site. Residues 152–160 (SAGPGTRAN) and N271 each bind NAD(+).

Belongs to the acetaldehyde dehydrogenase family.

The catalysed reaction is acetaldehyde + NAD(+) + CoA = acetyl-CoA + NADH + H(+). In Mycobacterium avium (strain 104), this protein is Acetaldehyde dehydrogenase.